A 71-amino-acid polypeptide reads, in one-letter code: Small ribosomal subunit protein bS21 (71 aa).

This sequence belongs to the bacterial ribosomal protein bS21 family.

The protein is Small ribosomal subunit protein bS21 of Wigglesworthia glossinidia brevipalpis.